We begin with the raw amino-acid sequence, 332 residues long: tRNA U34 carboxymethyltransferase (332 aa).

Carboxy-S-adenosyl-L-methionine is bound by residues lysine 96, tryptophan 110, lysine 115, glycine 135, 157 to 159 (DPT), 190 to 191 (IE), methionine 205, tyrosine 209, and arginine 324.

The protein belongs to the class I-like SAM-binding methyltransferase superfamily. CmoB family. Homotetramer.

It carries out the reaction carboxy-S-adenosyl-L-methionine + 5-hydroxyuridine(34) in tRNA = 5-carboxymethoxyuridine(34) in tRNA + S-adenosyl-L-homocysteine + H(+). Its function is as follows. Catalyzes carboxymethyl transfer from carboxy-S-adenosyl-L-methionine (Cx-SAM) to 5-hydroxyuridine (ho5U) to form 5-carboxymethoxyuridine (cmo5U) at position 34 in tRNAs. The chain is tRNA U34 carboxymethyltransferase from Alteromonas mediterranea (strain DSM 17117 / CIP 110805 / LMG 28347 / Deep ecotype).